A 940-amino-acid chain; its full sequence is MDKIEVRGARTHNLKNINLVIPRDKLIVVTGLSGSGKSSLAFDTLYAEGQRRYVESLSAYARQFLSLMEKPDVDHIEGLSPAISIEQKSTSHNPRSTVGTITEIHDYLRLLYARVGEPRCPDHDVPLAAQTVSQMVDNVLSQPEGKRLMLLAPIIKERKGEHTKTLENLASQGYIRARIDGEVCDLSDPPKLELQKKHTIEVVVDRFKVRDDLTQRLAESFETALELSGGTAVVADMDDPKAEELLFSANFACPICGYSMRELEPRLFSFNNPAGACPTCDGLGVQQYFDPDRVIQNPELSLAGGAIRGWDRRNFYYFQMLKSLADHYKFDVEAPWGSLSANVHKVVLYGSGKENIEFKYMNDRGDTSIRRHPFEGVLHNMERRYKETESSAVREELAKFISNRPCASCEGTRLRREARHVYVENTPLPAISDMSIGHAMEFFNNLKLAGQRAKIAEKILKEIGDRLKFLVNVGLNYLTLSRSAETLSGGEAQRIRLASQIGAGLVGVMYVLDEPSIGLHQRDNERLLGTLIHLRDLGNTVIVVEHDEDAIRAADHVIDIGPGAGVHGGEVVAEGPLEAIMAVPESLTGQYMSGKRKIEVPKKRVPANPEKVLKLTGARGNNLKDVTLTLPVGLFTCITGVSGSGKSTLINDTLFPIAQRQLNGATIAEPAPYRDIQGLEHFDKVIDIDQSPIGRTPRSNPATYTGVFTPVRELFAGVPESRARGYTPGRFSFNVRGGRCEACQGDGVIKVEMHFLPDIYVPCDQCKGKRYNRETLEIKYKGKTIHEVLDMTIEEAREFFDAVPALARKLQTLMDVGLTYIRLGQSATTLSGGEAQRVKLARELSKRGTGQTLYILDEPTTGLHFADIQQLLDVLHKLRDQGNTIVVIEHNLDVIKTADWIVDLGPEGGSGGGEILVSGTPETVAECKASHTARFLKPML.

31–38 (GLSGSGKS) serves as a coordination point for ATP. The C4-type zinc finger occupies 253 to 280 (CPICGYSMRELEPRLFSFNNPAGACPTC). 2 consecutive ABC transporter domains span residues 310–587 (WDRR…PESL) and 607–937 (ANPE…RFLK). 640–647 (GVSGSGKS) contacts ATP. The segment at 740 to 766 (CEACQGDGVIKVEMHFLPDIYVPCDQC) adopts a C4-type zinc-finger fold.

It belongs to the ABC transporter superfamily. UvrA family. In terms of assembly, forms a heterotetramer with UvrB during the search for lesions.

It is found in the cytoplasm. The UvrABC repair system catalyzes the recognition and processing of DNA lesions. UvrA is an ATPase and a DNA-binding protein. A damage recognition complex composed of 2 UvrA and 2 UvrB subunits scans DNA for abnormalities. When the presence of a lesion has been verified by UvrB, the UvrA molecules dissociate. The sequence is that of UvrABC system protein A from Escherichia coli O6:H1 (strain CFT073 / ATCC 700928 / UPEC).